Consider the following 190-residue polypeptide: Interferon alpha-11 (190 aa).

The signal sequence occupies residues 1–23 (MARLCAFLMILIVMSYWSTCSLG). 2 cysteine pairs are disulfide-bonded: Cys-24–Cys-122 and Cys-52–Cys-162. N-linked (GlcNAc...) asparagine glycosylation is present at Asn-101.

Belongs to the alpha/beta interferon family. Post-translationally, N-glycosylated.

It localises to the secreted. Functionally, has antiviral and antiproliferative activities. Produced by macrophages and stimulates the production of two enzymes: a protein kinase and an oligoadenylate synthetase. During viral infection, mediates antiviral effect, either directly by inducing interferon-stimulated genes, either indirectly through stimulation of natural killer cells enabling them to control viral replication. This Mus musculus (Mouse) protein is Interferon alpha-11 (Ifna11).